Reading from the N-terminus, the 686-residue chain is tRNA wybutosine-synthesizing protein 4 (686 aa).

The tract at residues 1 to 22 is disordered; it reads MGPRSRQRRTGTVQSTNDSSSL. The span at 10–22 shows a compositional bias: polar residues; that stretch reads TGTVQSTNDSSSL. S-adenosyl-L-methionine is bound by residues arginine 59, glycine 89, aspartate 114, 161-162, and glutamate 188; that span reads DL.

The protein belongs to the methyltransferase superfamily. LCMT family. Interacts with RNF144B/IBRDC2.

It carries out the reaction 7-[(3S)-3-amino-3-carboxypropyl]wyosine(37) in tRNA(Phe) + S-adenosyl-L-methionine = 7-[(3S)-(3-amino-3-methoxycarbonyl)propyl]wyosine(37) in tRNA(Phe) + S-adenosyl-L-homocysteine. It catalyses the reaction 7-[(3S)-(3-amino-3-methoxycarbonyl)propyl]wyosine(37) in tRNA(Phe) + S-adenosyl-L-methionine + CO2 = wybutosine(37) in tRNA(Phe) + S-adenosyl-L-homocysteine + 2 H(+). It functions in the pathway tRNA modification; wybutosine-tRNA(Phe) biosynthesis. Its function is as follows. Probable S-adenosyl-L-methionine-dependent methyltransferase that acts as a component of the wybutosine biosynthesis pathway. Wybutosine is a hyper modified guanosine with a tricyclic base found at the 3'-position adjacent to the anticodon of eukaryotic phenylalanine tRNA. May methylate the carboxyl group of leucine residues to form alpha-leucine ester residues. The protein is tRNA wybutosine-synthesizing protein 4 (Lcmt2) of Rattus norvegicus (Rat).